Reading from the N-terminus, the 1026-residue chain is SWI/SNF-related matrix-associated actin-dependent regulator of chromatin subfamily A containing DEAD/H box 1 (1026 aa).

At methionine 1 the chain carries N-acetylmethionine. The tract at residues 1 to 82 is disordered; that stretch reads MNLFNLDRFR…DNERKASISY (82 aa). A compositionally biased stretch (basic and acidic residues) spans 7–19; sequence DRFRFEKRNKIEE. Threonine 54 is subject to Phosphothreonine. Serine 57 is modified (phosphoserine). Residue threonine 71 is modified to Phosphothreonine. Lysine 77 is covalently cross-linked (Glycyl lysine isopeptide (Lys-Gly) (interchain with G-Cter in SUMO2)). The residue at position 79 (serine 79) is a Phosphoserine. Lysine 84 is covalently cross-linked (Glycyl lysine isopeptide (Lys-Gly) (interchain with G-Cter in SUMO2)). A phosphoserine mark is found at serine 124, serine 127, serine 132, serine 146, and serine 152. A CUE 1 domain is found at 157-199; sequence LKDAKLQTLKELFPQRSDNDLLKLIESTSTMDGAIAAALLMFG. Disordered stretches follow at residues 203–251 and 302–328; these read GGPR…NWEK and SQSE…KTKL. A phosphoserine mark is found at serine 211 and serine 214. Position 217 is a phosphotyrosine (tyrosine 217). Basic and acidic residues predominate over residues 226–238; that stretch reads QSIKKTRLDHGEE. Phosphoserine occurs at positions 239 and 242. Positions 251–294 constitute a CUE 2 domain; the sequence is KQESIVLKLQKEFPNFDKQELREVLKEHEWMYTEALESLKVFAE. Serine 302 carries the post-translational modification Phosphoserine. Polar residues predominate over residues 314–323; the sequence is SRSQNYPKNA. Lysine 335 participates in a covalent cross-link: Glycyl lysine isopeptide (Lys-Gly) (interchain with G-Cter in SUMO2). The tract at residues 354 to 373 is disordered; sequence VVEDSEYDSGSDVGSSLDED. A Glycyl lysine isopeptide (Lys-Gly) (interchain with G-Cter in SUMO2) cross-link involves residue lysine 471. In terms of domain architecture, Helicase ATP-binding spans 509–677; it reads ALVHKHGLNG…MSLLNFVMPH (169 aa). 521-529 contacts ATP; it reads ADEMGLGKT. A DEGH box motif is present at residues 628-631; sequence DEGH. Positions 721-738 match the Nuclear localization signal motif; the sequence is RRVKEEVLKQLPPKKDRI. Lysine 724 is covalently cross-linked (Glycyl lysine isopeptide (Lys-Gly) (interchain with G-Cter in SUMO2)). The Helicase C-terminal domain maps to 858 to 1010; the sequence is VLGCILSELK…MTTVDEGDEG (153 aa). 897 to 904 is an ATP binding site; sequence YLRLDGKT. Lysine 996 participates in a covalent cross-link: Glycyl lysine isopeptide (Lys-Gly) (interchain with G-Cter in SUMO2). Residues 1005-1008 carry the DEGD box motif; it reads DEGD.

It belongs to the SNF2/RAD54 helicase family. In terms of assembly, binds to DNA preferentially in the vicinity of transcriptional start sites. Interacts with MSH2 and TRIM28. Part of a complex composed of TRIM28, HDAC1, HDAC2 and EHMT2. Interacts with PCNA. In terms of tissue distribution, isoform 1 is expressed ubiquitously. Isoform 3 is expressed mainly in skin and esophagus. Expressed in fibroblasts and keratinocytes (at protein level).

It localises to the nucleus. It is found in the chromosome. It carries out the reaction ATP + H2O = ADP + phosphate + H(+). Its function is as follows. DNA helicase that possesses intrinsic ATP-dependent nucleosome-remodeling activity and is both required for DNA repair and heterochromatin organization. Promotes DNA end resection of double-strand breaks (DSBs) following DNA damage: probably acts by weakening histone DNA interactions in nucleosomes flanking DSBs. Required for the restoration of heterochromatin organization after replication. Acts at replication sites to facilitate the maintenance of heterochromatin by directing H3 and H4 histones deacetylation, H3 'Lys-9' trimethylation (H3K9me3) and restoration of silencing. The chain is SWI/SNF-related matrix-associated actin-dependent regulator of chromatin subfamily A containing DEAD/H box 1 from Homo sapiens (Human).